Consider the following 630-residue polypeptide: Probable potassium transport system protein Kup (630 aa).

12 helical membrane-spanning segments follow: residues 17–37 (LAIA…LYSL), 51–71 (PSAI…VVGI), 105–125 (ITGL…GDAV), 144–164 (PQLS…LFWI), 175–195 (LFGP…IYHI), 218–238 (VLLA…AEAL), 255–275 (YVLV…LLLL), 283–303 (PFFL…STVA), 344–364 (IYVP…VIGF), 374–394 (YGIA…VVMV), 402–422 (LLVA…FGAN), and 428–448 (QGGW…MTWY).

This sequence belongs to the HAK/KUP transporter (TC 2.A.72) family.

The protein resides in the cell inner membrane. The catalysed reaction is K(+)(in) + H(+)(in) = K(+)(out) + H(+)(out). Functionally, transport of potassium into the cell. Likely operates as a K(+):H(+) symporter. This Burkholderia pseudomallei (strain K96243) protein is Probable potassium transport system protein Kup.